The following is a 601-amino-acid chain: UvrABC system protein C (601 aa).

A GIY-YIG domain is found at 15–94 (LQPGVYLFKN…IKSYKPRYNI (80 aa)). Positions 202 to 237 (QEIVREKEKEMAMAARSLEFEKAARLRDQIQSLRQL) constitute a UVR domain.

Belongs to the UvrC family. In terms of assembly, interacts with UvrB in an incision complex.

The protein resides in the cytoplasm. In terms of biological role, the UvrABC repair system catalyzes the recognition and processing of DNA lesions. UvrC both incises the 5' and 3' sides of the lesion. The N-terminal half is responsible for the 3' incision and the C-terminal half is responsible for the 5' incision. The sequence is that of UvrABC system protein C from Syntrophomonas wolfei subsp. wolfei (strain DSM 2245B / Goettingen).